An 81-amino-acid polypeptide reads, in one-letter code: Defensin-like protein 43 (81 aa).

The first 27 residues, 1 to 27 (MGITKTSVTFLFLLILAAFVSNYNVLA), serve as a signal peptide directing secretion. Disulfide bonds link Cys40–Cys79, Cys44–Cys67, Cys53–Cys77, and Cys57–Cys78.

This sequence belongs to the DEFL family.

It is found in the secreted. In Arabidopsis thaliana (Mouse-ear cress), this protein is Defensin-like protein 43.